A 90-amino-acid chain; its full sequence is UPF0297 protein lwe1516 (90 aa).

The protein belongs to the UPF0297 family.

The chain is UPF0297 protein lwe1516 from Listeria welshimeri serovar 6b (strain ATCC 35897 / DSM 20650 / CCUG 15529 / CIP 8149 / NCTC 11857 / SLCC 5334 / V8).